Reading from the N-terminus, the 152-residue chain is Superoxide dismutase [Cu-Zn] (152 aa).

At serine 2 the chain carries N-acetylserine. The Cu cation site is built by histidine 44, histidine 46, and histidine 61. Cysteines 55 and 144 form a disulfide. Zn(2+) contacts are provided by histidine 61, histidine 69, histidine 78, and aspartate 81. Cu cation is bound at residue histidine 118.

This sequence belongs to the Cu-Zn superoxide dismutase family. Monomer. Requires Cu cation as cofactor. Zn(2+) serves as cofactor.

The protein resides in the cytoplasm. The catalysed reaction is 2 superoxide + 2 H(+) = H2O2 + O2. Its activity is regulated as follows. Inhibited by KCN and diethyldithiocarbamate. Its function is as follows. Destroys radicals which are normally produced within the cells and which are toxic to biological systems. The plasma superoxide dismutase has phagocytosis-stimulating activity and may play an important role in the biological defenses of the organism. The protein is Superoxide dismutase [Cu-Zn] of Halocynthia roretzi (Sea squirt).